The following is a 546-amino-acid chain: 2-isopropylmalate synthase (546 aa).

The Pyruvate carboxyltransferase domain occupies 8-271 (ILIFDTTLRD…NSFFKRNPDS (264 aa)). Mn(2+) is bound by residues Asp-17, His-208, His-210, and Asn-244. The interval 408 to 546 (QLSLVQVSCG…TNTFLSNNAN (139 aa)) is regulatory domain.

It belongs to the alpha-IPM synthase/homocitrate synthase family. LeuA type 1 subfamily. In terms of assembly, homodimer. Mn(2+) is required as a cofactor.

It localises to the cytoplasm. The enzyme catalyses 3-methyl-2-oxobutanoate + acetyl-CoA + H2O = (2S)-2-isopropylmalate + CoA + H(+). Its pathway is amino-acid biosynthesis; L-leucine biosynthesis; L-leucine from 3-methyl-2-oxobutanoate: step 1/4. In terms of biological role, catalyzes the condensation of the acetyl group of acetyl-CoA with 3-methyl-2-oxobutanoate (2-ketoisovalerate) to form 3-carboxy-3-hydroxy-4-methylpentanoate (2-isopropylmalate). The protein is 2-isopropylmalate synthase of Prochlorococcus marinus (strain AS9601).